A 599-amino-acid chain; its full sequence is Aspartate--tRNA ligase (599 aa).

Glu180 is a binding site for L-aspartate. The segment at 204 to 207 is aspartate; that stretch reads QIFK. Arg226 contacts L-aspartate. ATP is bound by residues 226–228 and Gln235; that span reads RDE. His454 serves as a coordination point for L-aspartate. Glu488 provides a ligand contact to ATP. Residue Arg495 participates in L-aspartate binding. 540–543 serves as a coordination point for ATP; sequence GLDR.

This sequence belongs to the class-II aminoacyl-tRNA synthetase family. Type 1 subfamily. In terms of assembly, homodimer.

Its subcellular location is the cytoplasm. It carries out the reaction tRNA(Asp) + L-aspartate + ATP = L-aspartyl-tRNA(Asp) + AMP + diphosphate. Functionally, catalyzes the attachment of L-aspartate to tRNA(Asp) in a two-step reaction: L-aspartate is first activated by ATP to form Asp-AMP and then transferred to the acceptor end of tRNA(Asp). The sequence is that of Aspartate--tRNA ligase from Clostridium beijerinckii (strain ATCC 51743 / NCIMB 8052) (Clostridium acetobutylicum).